We begin with the raw amino-acid sequence, 802 residues long: Elongation factor G, mitochondrial (802 aa).

Residues 1 to 24 constitute a mitochondrion transit peptide; that stretch reads MRCPSLARLPNRALSGLTRSPVRL. The tr-type G domain occupies 100–387; the sequence is SRLRNIGIAA…GVIDYLPNPS (288 aa). GTP contacts are provided by residues 109-116, 185-189, and 239-242; these read AHIDSGKT, DTPGH, and NKMD.

This sequence belongs to the TRAFAC class translation factor GTPase superfamily. Classic translation factor GTPase family. EF-G/EF-2 subfamily.

Its subcellular location is the mitochondrion. The protein operates within protein biosynthesis; polypeptide chain elongation. Functionally, mitochondrial GTPase that catalyzes the GTP-dependent ribosomal translocation step during translation elongation. During this step, the ribosome changes from the pre-translocational (PRE) to the post-translocational (POST) state as the newly formed A-site-bound peptidyl-tRNA and P-site-bound deacylated tRNA move to the P and E sites, respectively. Catalyzes the coordinated movement of the two tRNA molecules, the mRNA and conformational changes in the ribosome. This is Elongation factor G, mitochondrial (mef1) from Aspergillus fumigatus (strain CBS 144.89 / FGSC A1163 / CEA10) (Neosartorya fumigata).